Consider the following 302-residue polypeptide: Sulfate adenylyltransferase subunit 2 (302 aa).

It belongs to the PAPS reductase family. CysD subfamily. In terms of assembly, heterodimer composed of CysD, the smaller subunit, and CysN.

The enzyme catalyses sulfate + ATP + H(+) = adenosine 5'-phosphosulfate + diphosphate. It participates in sulfur metabolism; hydrogen sulfide biosynthesis; sulfite from sulfate: step 1/3. Functionally, with CysN forms the ATP sulfurylase (ATPS) that catalyzes the adenylation of sulfate producing adenosine 5'-phosphosulfate (APS) and diphosphate, the first enzymatic step in sulfur assimilation pathway. APS synthesis involves the formation of a high-energy phosphoric-sulfuric acid anhydride bond driven by GTP hydrolysis by CysN coupled to ATP hydrolysis by CysD. In Sodalis glossinidius (strain morsitans), this protein is Sulfate adenylyltransferase subunit 2.